A 369-amino-acid polypeptide reads, in one-letter code: Phospho-N-acetylmuramoyl-pentapeptide-transferase (369 aa).

10 helical membrane passes run 2 to 22 (IALL…TPLF), 55 to 75 (TVVV…MFLM), 86 to 106 (ALIL…DDFI), 120 to 140 (AKLI…LNFP), 163 to 183 (LAFG…NLIV), 196 to 216 (LDGL…LMGI), 239 to 259 (PLDL…FLWW), 266 to 286 (IFMG…FAIL), 291 to 311 (LLLG…IIQV), and 348 to 368 (ILGG…WVVL).

It belongs to the glycosyltransferase 4 family. MraY subfamily. Requires Mg(2+) as cofactor.

The protein localises to the cell membrane. It catalyses the reaction UDP-N-acetyl-alpha-D-muramoyl-L-alanyl-gamma-D-glutamyl-meso-2,6-diaminopimeloyl-D-alanyl-D-alanine + di-trans,octa-cis-undecaprenyl phosphate = di-trans,octa-cis-undecaprenyl diphospho-N-acetyl-alpha-D-muramoyl-L-alanyl-D-glutamyl-meso-2,6-diaminopimeloyl-D-alanyl-D-alanine + UMP. It functions in the pathway cell wall biogenesis; peptidoglycan biosynthesis. Its function is as follows. Catalyzes the initial step of the lipid cycle reactions in the biosynthesis of the cell wall peptidoglycan: transfers peptidoglycan precursor phospho-MurNAc-pentapeptide from UDP-MurNAc-pentapeptide onto the lipid carrier undecaprenyl phosphate, yielding undecaprenyl-pyrophosphoryl-MurNAc-pentapeptide, known as lipid I. This Pseudarthrobacter chlorophenolicus (strain ATCC 700700 / DSM 12829 / CIP 107037 / JCM 12360 / KCTC 9906 / NCIMB 13794 / A6) (Arthrobacter chlorophenolicus) protein is Phospho-N-acetylmuramoyl-pentapeptide-transferase.